A 723-amino-acid chain; its full sequence is Zinc finger protein 750 (723 aa).

The segment at 25-51 (YKCFQCPFTCNEKSHLFNHMKYGLCKN) adopts a CCHC-type zinc-finger fold. Zn(2+) is bound by residues C27, C30, H43, and C49. Disordered stretches follow at residues 64–91 (KCPKSNSLDPKQTNQPDATAKPASSKSV), 132–153 (LHRASPCKSPAPEAALGAQPAL), 359–427 (ASSP…SQTC), 466–630 (PAQA…SEEQ), and 650–723 (RVGD…ARVS). Residues 67–91 (KSNSLDPKQTNQPDATAKPASSKSV) are compositionally biased toward polar residues. Residues 360–369 (SSPSRLNPSD) show a composition bias toward polar residues. The segment covering 370-397 (PNRKHVEFESPIPEAKDSSKAGQRDTEG) has biased composition (basic and acidic residues). Residues 470–482 (AETTAESPVSLNV) are compositionally biased toward polar residues. Residues 500-509 (AAPSSPDDSS) show a composition bias toward low complexity. Positions 530-545 (PTYQGSPQAETASFSE) are enriched in polar residues. 2 stretches are compositionally biased toward low complexity: residues 563–582 (APRPAFPGRPRAAEPAAAVP) and 606–616 (GDGAPPTGPGE). Positions 666-678 (DTPTLSSMESQEA) are enriched in polar residues.

In terms of tissue distribution, expressed in the skin, prostate, lung, placenta and thymus, and at low level in T-cells. Not expressed in peripheral blood leukocytes, pancreas and brain. Clearly expressed in primary keratinocytes but not in fibroblasts.

The protein resides in the nucleus. Its function is as follows. Transcription factor involved in epidermis differentiation. Required for terminal epidermal differentiation: acts downstream of p63/TP63 and activates expression of late epidermal differentiation genes. Specifically binds to the promoter of KLF4 and promotes its expression. This Homo sapiens (Human) protein is Zinc finger protein 750 (ZNF750).